The following is a 196-amino-acid chain: uncharacterized protein (196 aa).

It to H.influenzae HI_0431.

This is an uncharacterized protein from Escherichia coli (strain K12).